Consider the following 165-residue polypeptide: UPF0254 protein MmarC7_0182 (165 aa).

It belongs to the UPF0254 family.

In Methanococcus maripaludis (strain C7 / ATCC BAA-1331), this protein is UPF0254 protein MmarC7_0182.